The chain runs to 707 residues: Lipase maturation factor 2 (707 aa).

The next 9 membrane-spanning stretches (helical) occupy residues 11–31, 78–98, 102–122, 126–146, 220–240, 256–276, 306–326, 358–378, and 398–418; these read FLWG…AQIP, MEMI…FSFL, LVFL…QVFL, WDSL…VHAL, FSVV…FLPF, ILII…VLCC, LYSL…FWTV, ITFP…LKGM, and VIFS…YTYI. Asn-483 is a glycosylation site (N-linked (GlcNAc...) asparagine). The chain crosses the membrane as a helical span at residues 634 to 654; that stretch reads LLLHSFIFGIFTIYFLQAMFG. Positions 659 to 707 are disordered; the sequence is PGVAKQRHSKPPNEKKKQKSNSGQGESAAAKSSGHGADTVRRNKKNEKS. Positions 696 to 707 are enriched in basic and acidic residues; sequence DTVRRNKKNEKS.

Belongs to the lipase maturation factor family.

Its subcellular location is the endoplasmic reticulum membrane. Functionally, involved in the maturation of specific proteins in the endoplasmic reticulum. In Xenopus tropicalis (Western clawed frog), this protein is Lipase maturation factor 2 (lmf2).